We begin with the raw amino-acid sequence, 987 residues long: Ephrin type-B receptor 4 (987 aa).

A signal peptide spans 1-15 (MELRALLCWASLATA). At 16 to 539 (LEETLLNTKL…ESESWREQLA (524 aa)) the chain is on the extracellular side. The 186-residue stretch at 17–202 (EETLLNTKLE…FYKKCSWLIT (186 aa)) folds into the Eph LBD domain. Cystine bridges form between Cys-61-Cys-184 and Cys-97-Cys-107. Asn-203, Asn-335, and Asn-426 each carry an N-linked (GlcNAc...) asparagine glycan. Fibronectin type-III domains follow at residues 323–432 (PPSA…TDRE) and 436–529 (AVSD…TQLD). Residues 540–560 (LIAGTAVVGVVLVLVVVIIAV) traverse the membrane as a helical segment. Residues 561-987 (LCLRKQSNGR…GGTGGPAQQF (427 aa)) are Cytoplasmic-facing. The Protein kinase domain maps to 615 to 899 (VKIEEVIGAG…ENGGASHPLL (285 aa)). Residues 621–629 (IGAGEFGEV) and Lys-647 contribute to the ATP site. Asp-740 (proton acceptor) is an active-site residue. Phosphoserine occurs at positions 769, 770, 911, and 943. One can recognise an SAM domain in the interval 907 to 971 (SAFGSVGEWL…LASVQHMKSQ (65 aa)). Residues 965 to 987 (VQHMKSQAKPGAPGGTGGPAQQF) form a disordered region. Gly residues predominate over residues 976 to 987 (APGGTGGPAQQF). The PDZ-binding motif lies at 985–987 (QQF).

It belongs to the protein kinase superfamily. Tyr protein kinase family. Ephrin receptor subfamily. As to quaternary structure, heterotetramer upon binding of the ligand. The heterotetramer is composed of an ephrin dimer and a receptor dimer. Oligomerization is probably required to induce biological responses. Interacts with RASA1; the interaction depends on EPHB4 tyrosine-phosphorylation. Phosphorylated; autophosphorylation is stimulated by EFNB2. In terms of tissue distribution, expressed in various organ systems, including lung, liver, kidney, intestine, muscle and heart. Expressed in myogenic progenitor cells.

The protein localises to the cell membrane. The catalysed reaction is L-tyrosyl-[protein] + ATP = O-phospho-L-tyrosyl-[protein] + ADP + H(+). Receptor tyrosine kinase which binds promiscuously transmembrane ephrin-B family ligands residing on adjacent cells, leading to contact-dependent bidirectional signaling into neighboring cells. The signaling pathway downstream of the receptor is referred to as forward signaling while the signaling pathway downstream of the ephrin ligand is referred to as reverse signaling. Together with its cognate ligand/functional ligand EFNB2 it is involved in the regulation of cell adhesion and migration, and plays a central role in heart morphogenesis, angiogenesis and blood vessel remodeling and permeability. EPHB4-mediated forward signaling controls cellular repulsion and segregation from EFNB2-expressing cells. In Mus musculus (Mouse), this protein is Ephrin type-B receptor 4 (Ephb4).